The chain runs to 222 residues: MSHLVKMENGQSQTIQEMLGCIERYNPDHLKILESYVQDQAKNNTYDLEANLAVLKLYQFNPHMLNFEITYTILLKCLTNLPHTDFVMAKCLLLPQQMKDENVQTIIDLADILERADFTLFWQRAEVNRTMFRHITGFHDSIRKFVSHVVGTTFQTIKKDLLKELLGGIEDPTLESWIKRNSWKHQGQDLVVVATQDDKIKTKNITEKIEFDNVGALMAQCL.

Residues 46-208 form the PCI domain; it reads YDLEANLAVL…KIKTKNITEK (163 aa).

The protein belongs to the eIF-3 subunit K family. Component of the eukaryotic translation initiation factor 3 (eIF-3) complex. The eIF-3 complex interacts with pix.

It is found in the cytoplasm. Functionally, component of the eukaryotic translation initiation factor 3 (eIF-3) complex, which is involved in protein synthesis of a specialized repertoire of mRNAs and, together with other initiation factors, stimulates binding of mRNA and methionyl-tRNAi to the 40S ribosome. The eIF-3 complex specifically targets and initiates translation of a subset of mRNAs involved in cell proliferation. This Drosophila willistoni (Fruit fly) protein is Eukaryotic translation initiation factor 3 subunit K.